The following is a 533-amino-acid chain: Glucose-6-phosphate isomerase (533 aa).

The Proton donor role is filled by E330. Catalysis depends on residues H359 and K461.

Belongs to the GPI family.

The protein resides in the cytoplasm. The enzyme catalyses alpha-D-glucose 6-phosphate = beta-D-fructose 6-phosphate. It functions in the pathway carbohydrate biosynthesis; gluconeogenesis. It participates in carbohydrate degradation; glycolysis; D-glyceraldehyde 3-phosphate and glycerone phosphate from D-glucose: step 2/4. Catalyzes the reversible isomerization of glucose-6-phosphate to fructose-6-phosphate. The polypeptide is Glucose-6-phosphate isomerase (Prochlorococcus marinus (strain SARG / CCMP1375 / SS120)).